The sequence spans 253 residues: Small ribosomal subunit protein cS22 (253 aa).

Residues 1 to 56 (MATFLTNVVSIKPTIFSFQSESFTPLHTRVNVFSSKPFPSLAGTFSRSSRTRFIPY) constitute a chloroplast transit peptide. 2 RRM domains span residues 76 to 154 (RRVY…ITEK) and 177 to 253 (YKVY…VNKA).

This sequence belongs to the chloroplast-specific ribosomal protein cS22 family. As to quaternary structure, component of the chloroplast small ribosomal subunit (SSU). Mature 70S chloroplast ribosomes of higher plants consist of a small (30S) and a large (50S) subunit. The 30S small subunit contains 1 molecule of ribosomal RNA (16S rRNA) and 24 different proteins. The 50S large subunit contains 3 rRNA molecules (23S, 5S and 4.5S rRNA) and 33 different proteins. In terms of tissue distribution, expressed constitutively in roots, stems, flower buds, flowers and leaves.

It localises to the plastid. Its subcellular location is the chloroplast. Its function is as follows. Component of the chloroplast ribosome (chloro-ribosome), a dedicated translation machinery responsible for the synthesis of chloroplast genome-encoded proteins, including proteins of the transcription and translation machinery and components of the photosynthetic apparatus. May have a role in the recruitment of stored chloroplast mRNAs for active protein synthesis. Bind single strand DNA (ssDNA) and RNA in vitro. Exhibits RNA chaperone activity. Negatively regulates resistance responses to abiotic stresses during seed germination (e.g. salt, dehydration, and low temperature) and seedling growth (e.g. salt). The sequence is that of Small ribosomal subunit protein cS22 from Arabidopsis thaliana (Mouse-ear cress).